A 216-amino-acid chain; its full sequence is 3-isopropylmalate dehydratase small subunit 2 (216 aa).

It belongs to the LeuD family. LeuD type 1 subfamily. Heterodimer of LeuC and LeuD.

It carries out the reaction (2R,3S)-3-isopropylmalate = (2S)-2-isopropylmalate. It participates in amino-acid biosynthesis; L-leucine biosynthesis; L-leucine from 3-methyl-2-oxobutanoate: step 2/4. Functionally, catalyzes the isomerization between 2-isopropylmalate and 3-isopropylmalate, via the formation of 2-isopropylmaleate. The chain is 3-isopropylmalate dehydratase small subunit 2 from Bordetella pertussis (strain Tohama I / ATCC BAA-589 / NCTC 13251).